A 565-amino-acid polypeptide reads, in one-letter code: Proline--tRNA ligase (565 aa).

The protein belongs to the class-II aminoacyl-tRNA synthetase family. ProS type 1 subfamily. Homodimer.

The protein localises to the cytoplasm. It catalyses the reaction tRNA(Pro) + L-proline + ATP = L-prolyl-tRNA(Pro) + AMP + diphosphate. Catalyzes the attachment of proline to tRNA(Pro) in a two-step reaction: proline is first activated by ATP to form Pro-AMP and then transferred to the acceptor end of tRNA(Pro). As ProRS can inadvertently accommodate and process non-cognate amino acids such as alanine and cysteine, to avoid such errors it has two additional distinct editing activities against alanine. One activity is designated as 'pretransfer' editing and involves the tRNA(Pro)-independent hydrolysis of activated Ala-AMP. The other activity is designated 'posttransfer' editing and involves deacylation of mischarged Ala-tRNA(Pro). The misacylated Cys-tRNA(Pro) is not edited by ProRS. The protein is Proline--tRNA ligase of Hydrogenobaculum sp. (strain Y04AAS1).